The primary structure comprises 446 residues: Na(+)-translocating NADH-quinone reductase subunit A (446 aa).

The protein belongs to the NqrA family. Composed of six subunits; NqrA, NqrB, NqrC, NqrD, NqrE and NqrF.

The enzyme catalyses a ubiquinone + n Na(+)(in) + NADH + H(+) = a ubiquinol + n Na(+)(out) + NAD(+). With respect to regulation, this reaction is tightly coupled to the Na(+) pumping activity and specifically requires Na(+) for activity. Inhibited by korormicin and 2-N-heptyl-4-hydroxyquinoline N-oxide (HQNO). NQR complex catalyzes the reduction of ubiquinone-1 to ubiquinol by two successive reactions, coupled with the transport of Na(+) ions from the cytoplasm to the periplasm. NqrA to NqrE are probably involved in the second step, the conversion of ubisemiquinone to ubiquinol. The chain is Na(+)-translocating NADH-quinone reductase subunit A from Vibrio alginolyticus.